Here is a 191-residue protein sequence, read N- to C-terminus: Adenylate kinase (191 aa).

Gly12–Thr17 serves as a coordination point for ATP. The interval Ser33–Val62 is NMP. AMP-binding positions include Thr34, Arg39, Asn60–Val62, Gly87–Arg90, and Gln94. Residues Gly129–Asp135 form an LID region. Arg130 is an ATP binding site. AMP contacts are provided by Arg132 and Arg144. Position 172 (Arg172) interacts with ATP.

The protein belongs to the adenylate kinase family. Monomer.

The protein localises to the cytoplasm. It carries out the reaction AMP + ATP = 2 ADP. The protein operates within purine metabolism; AMP biosynthesis via salvage pathway; AMP from ADP: step 1/1. Functionally, catalyzes the reversible transfer of the terminal phosphate group between ATP and AMP. Plays an important role in cellular energy homeostasis and in adenine nucleotide metabolism. This is Adenylate kinase from Campylobacter fetus subsp. fetus (strain 82-40).